Consider the following 392-residue polypeptide: Phospho-N-acetylmuramoyl-pentapeptide-transferase (392 aa).

Helical transmembrane passes span 28 to 48 (RALMAALTALVVGLVAGPYVI), 74 to 94 (TPTMGGVLVLFAIAFATLMWF), 100 to 120 (FVWIVLWVTLGFGAIGWVDDW), 137 to 157 (YFWQSVVGLIAGFYLLFSISE), 193 to 213 (VSYPLGGIGFVILTYLVIVGA), 225 to 245 (GLAIMPVVMVGSALGVFAYVT), 262 to 282 (SGELLVFCSAMAGAGLAFLWF), 289 to 309 (VFMGDVGALALGGALGTIAVI), 314 to 334 (IVFFIMGGIFVVEAISVMAQV), and 369 to 389 (QVVVRFWIITMLLCLIGLSTL).

This sequence belongs to the glycosyltransferase 4 family. MraY subfamily. Requires Mg(2+) as cofactor.

Its subcellular location is the cell inner membrane. The catalysed reaction is UDP-N-acetyl-alpha-D-muramoyl-L-alanyl-gamma-D-glutamyl-meso-2,6-diaminopimeloyl-D-alanyl-D-alanine + di-trans,octa-cis-undecaprenyl phosphate = di-trans,octa-cis-undecaprenyl diphospho-N-acetyl-alpha-D-muramoyl-L-alanyl-D-glutamyl-meso-2,6-diaminopimeloyl-D-alanyl-D-alanine + UMP. It functions in the pathway cell wall biogenesis; peptidoglycan biosynthesis. Catalyzes the initial step of the lipid cycle reactions in the biosynthesis of the cell wall peptidoglycan: transfers peptidoglycan precursor phospho-MurNAc-pentapeptide from UDP-MurNAc-pentapeptide onto the lipid carrier undecaprenyl phosphate, yielding undecaprenyl-pyrophosphoryl-MurNAc-pentapeptide, known as lipid I. The chain is Phospho-N-acetylmuramoyl-pentapeptide-transferase from Variovorax paradoxus (strain S110).